A 367-amino-acid polypeptide reads, in one-letter code: Queuine tRNA-ribosyltransferase (367 aa).

Asp92 functions as the Proton acceptor in the catalytic mechanism. Residues 92–96, Asp146, Gln188, and Gly215 each bind substrate; that span reads DSGGF. The RNA binding stretch occupies residues 246–252; the sequence is GVGTPKD. Asp265 (nucleophile) is an active-site residue. Residues Cys303, Cys305, Cys308, and His334 each coordinate Zn(2+).

This sequence belongs to the queuine tRNA-ribosyltransferase family. Homodimer. Within each dimer, one monomer is responsible for RNA recognition and catalysis, while the other monomer binds to the replacement base PreQ1. Zn(2+) serves as cofactor.

The catalysed reaction is 7-aminomethyl-7-carbaguanine + guanosine(34) in tRNA = 7-aminomethyl-7-carbaguanosine(34) in tRNA + guanine. The protein operates within tRNA modification; tRNA-queuosine biosynthesis. Catalyzes the base-exchange of a guanine (G) residue with the queuine precursor 7-aminomethyl-7-deazaguanine (PreQ1) at position 34 (anticodon wobble position) in tRNAs with GU(N) anticodons (tRNA-Asp, -Asn, -His and -Tyr). Catalysis occurs through a double-displacement mechanism. The nucleophile active site attacks the C1' of nucleotide 34 to detach the guanine base from the RNA, forming a covalent enzyme-RNA intermediate. The proton acceptor active site deprotonates the incoming PreQ1, allowing a nucleophilic attack on the C1' of the ribose to form the product. After dissociation, two additional enzymatic reactions on the tRNA convert PreQ1 to queuine (Q), resulting in the hypermodified nucleoside queuosine (7-(((4,5-cis-dihydroxy-2-cyclopenten-1-yl)amino)methyl)-7-deazaguanosine). This is Queuine tRNA-ribosyltransferase from Francisella tularensis subsp. mediasiatica (strain FSC147).